A 202-amino-acid polypeptide reads, in one-letter code: Na(+)-translocating NADH-quinone reductase subunit E (202 aa).

The next 6 helical transmembrane spans lie at 11 to 31 (SVFVKNMALAYFLGMCTFLAI), 35 to 55 (IDAAIGLGIAVVVVLTITVPV), 81 to 101 (FLGLICYIGVIAAIVQIMEMV), 114 to 134 (GVFLPLITVNCAILGAALLMV), 144 to 164 (VVFGVGSGVGWAFAIVALAGI), and 182 to 202 (ITFITVGLMSLGFMSFGGIAL).

It belongs to the NqrDE/RnfAE family. Composed of six subunits; NqrA, NqrB, NqrC, NqrD, NqrE and NqrF.

The protein resides in the cell inner membrane. It catalyses the reaction a ubiquinone + n Na(+)(in) + NADH + H(+) = a ubiquinol + n Na(+)(out) + NAD(+). NQR complex catalyzes the reduction of ubiquinone-1 to ubiquinol by two successive reactions, coupled with the transport of Na(+) ions from the cytoplasm to the periplasm. NqrA to NqrE are probably involved in the second step, the conversion of ubisemiquinone to ubiquinol. This Saccharophagus degradans (strain 2-40 / ATCC 43961 / DSM 17024) protein is Na(+)-translocating NADH-quinone reductase subunit E.